We begin with the raw amino-acid sequence, 1032 residues long: uncharacterized protein (1032 aa).

Disordered regions lie at residues 54–80 (NNNNNNNNNNNNNNNNNNNNNNNNNNN), 391–451 (QLQI…QTHL), and 884–934 (INNE…SKVK). Over residues 884–907 (INNENNNENNNNYNGNINSNNNNN) the composition is skewed to low complexity.

This is an uncharacterized protein from Dictyostelium discoideum (Social amoeba).